Consider the following 183-residue polypeptide: UPF0134 protein MPN_100 (183 aa).

The protein belongs to the UPF0134 family.

The polypeptide is UPF0134 protein MPN_100 (Mycoplasma pneumoniae (strain ATCC 29342 / M129 / Subtype 1) (Mycoplasmoides pneumoniae)).